A 257-amino-acid chain; its full sequence is Cobalt transport protein CbiM (257 aa).

The signal sequence occupies residues 1-33 (MVKPTQAKRYASLGAIALLTTSLVVASPNPALA). Helical transmembrane passes span 39–59 (GFLPLGWAVGWWLAFLPFLAW), 74–94 (SVLLVALAGAYAFVVSSLKIP), 117–137 (LMAVLGTLVLLFQSLLIAHGG), 138–158 (LTTLGANAFSMAVVGPWLAWL), 171–191 (AIALFAASFISNVGTYTLTSL), and 214–234 (LFAVTQIPLAISEGLLTVLVW).

It belongs to the CbiM family. In terms of assembly, forms an energy-coupling factor (ECF) transporter complex composed of an ATP-binding protein (A component, CbiO), a transmembrane protein (T component, CbiQ) and 2 possible substrate-capture proteins (S components, CbiM and CbiN) of unknown stoichimetry.

It localises to the cell inner membrane. It participates in cofactor biosynthesis; adenosylcobalamin biosynthesis. Functionally, part of the energy-coupling factor (ECF) transporter complex CbiMNOQ involved in cobalt import. In Thermosynechococcus vestitus (strain NIES-2133 / IAM M-273 / BP-1), this protein is Cobalt transport protein CbiM.